The sequence spans 153 residues: Ubiquitin-conjugating enzyme E2-18 kDa (153 aa).

One can recognise a UBC core domain in the interval Ala-2–Glu-149. Cys-86 acts as the Glycyl thioester intermediate in catalysis.

The protein belongs to the ubiquitin-conjugating enzyme family.

It carries out the reaction S-ubiquitinyl-[E1 ubiquitin-activating enzyme]-L-cysteine + [E2 ubiquitin-conjugating enzyme]-L-cysteine = [E1 ubiquitin-activating enzyme]-L-cysteine + S-ubiquitinyl-[E2 ubiquitin-conjugating enzyme]-L-cysteine.. It functions in the pathway protein modification; protein ubiquitination. Catalyzes the covalent attachment of ubiquitin to other proteins. The protein is Ubiquitin-conjugating enzyme E2-18 kDa (Ubc84D) of Drosophila melanogaster (Fruit fly).